The sequence spans 476 residues: Glycogen synthase (476 aa).

ADP-alpha-D-glucose is bound at residue lysine 15.

Belongs to the glycosyltransferase 1 family. Bacterial/plant glycogen synthase subfamily.

The enzyme catalyses [(1-&gt;4)-alpha-D-glucosyl](n) + ADP-alpha-D-glucose = [(1-&gt;4)-alpha-D-glucosyl](n+1) + ADP + H(+). The protein operates within glycan biosynthesis; glycogen biosynthesis. Its function is as follows. Synthesizes alpha-1,4-glucan chains using ADP-glucose. The chain is Glycogen synthase from Bacillus cereus (strain ATCC 10987 / NRS 248).